We begin with the raw amino-acid sequence, 250 residues long: 5-oxoprolinase subunit A (250 aa).

Belongs to the LamB/PxpA family. Forms a complex composed of PxpA, PxpB and PxpC.

The catalysed reaction is 5-oxo-L-proline + ATP + 2 H2O = L-glutamate + ADP + phosphate + H(+). In terms of biological role, catalyzes the cleavage of 5-oxoproline to form L-glutamate coupled to the hydrolysis of ATP to ADP and inorganic phosphate. In Staphylococcus aureus (strain Mu3 / ATCC 700698), this protein is 5-oxoprolinase subunit A.